The following is a 297-amino-acid chain: Octopine catabolism/uptake operon regulatory protein OccR (297 aa).

Residues 1 to 58 (MNLRQVEAFRAVMLTGQMTAAAELMLVTQPAISRLIKDFERATKLQLFERRGNHIIPT) enclose the HTH lysR-type domain. Residues 18 to 37 (MTAAAELMLVTQPAISRLIK) constitute a DNA-binding region (H-T-H motif).

It belongs to the LysR transcriptional regulatory family.

Functionally, positive regulatory protein for the occ operon involved in octopine catabolism and uptake. Also acts as a negative regulator of its expression. In Rhizobium meliloti (Ensifer meliloti), this protein is Octopine catabolism/uptake operon regulatory protein OccR (occR).